Reading from the N-terminus, the 104-residue chain is Large ribosomal subunit protein uL24 (104 aa).

It belongs to the universal ribosomal protein uL24 family. Part of the 50S ribosomal subunit.

One of two assembly initiator proteins, it binds directly to the 5'-end of the 23S rRNA, where it nucleates assembly of the 50S subunit. Its function is as follows. One of the proteins that surrounds the polypeptide exit tunnel on the outside of the subunit. The chain is Large ribosomal subunit protein uL24 from Enterobacter sp. (strain 638).